The chain runs to 99 residues: Co-chaperonin GroES (99 aa).

It belongs to the GroES chaperonin family. In terms of assembly, heptamer of 7 subunits arranged in a ring. Interacts with the chaperonin GroEL.

The protein localises to the cytoplasm. In terms of biological role, together with the chaperonin GroEL, plays an essential role in assisting protein folding. The GroEL-GroES system forms a nano-cage that allows encapsulation of the non-native substrate proteins and provides a physical environment optimized to promote and accelerate protein folding. GroES binds to the apical surface of the GroEL ring, thereby capping the opening of the GroEL channel. The polypeptide is Co-chaperonin GroES (Methylacidiphilum infernorum (isolate V4) (Methylokorus infernorum (strain V4))).